Reading from the N-terminus, the 283-residue chain is Thymidylate synthase (283 aa).

A dUMP-binding site is contributed by R22. C160 functions as the Nucleophile in the catalytic mechanism. Residues 180 to 183 (RSCD), N191, and 221 to 223 (HIY) contribute to the dUMP site. D183 lines the (6R)-5,10-methylene-5,6,7,8-tetrahydrofolate pocket. S282 contacts (6R)-5,10-methylene-5,6,7,8-tetrahydrofolate.

This sequence belongs to the thymidylate synthase family. Bacterial-type ThyA subfamily. In terms of assembly, homodimer.

The protein resides in the cytoplasm. The catalysed reaction is dUMP + (6R)-5,10-methylene-5,6,7,8-tetrahydrofolate = 7,8-dihydrofolate + dTMP. The protein operates within pyrimidine metabolism; dTTP biosynthesis. In terms of biological role, catalyzes the reductive methylation of 2'-deoxyuridine-5'-monophosphate (dUMP) to 2'-deoxythymidine-5'-monophosphate (dTMP) while utilizing 5,10-methylenetetrahydrofolate (mTHF) as the methyl donor and reductant in the reaction, yielding dihydrofolate (DHF) as a by-product. This enzymatic reaction provides an intracellular de novo source of dTMP, an essential precursor for DNA biosynthesis. The sequence is that of Thymidylate synthase from Actinobacillus succinogenes (strain ATCC 55618 / DSM 22257 / CCUG 43843 / 130Z).